Consider the following 363-residue polypeptide: Probable dual-specificity RNA methyltransferase RlmN (363 aa).

Glutamate 106 acts as the Proton acceptor in catalysis. The 234-residue stretch at 112 to 345 (HEYGNSVCVT…VTIRREQGHD (234 aa)) folds into the Radical SAM core domain. Cysteine 119 and cysteine 350 are disulfide-bonded. The [4Fe-4S] cluster site is built by cysteine 126, cysteine 130, and cysteine 133. S-adenosyl-L-methionine-binding positions include 176–177 (GE), serine 208, 231–233 (SLH), and asparagine 307. The active-site S-methylcysteine intermediate is the cysteine 350.

This sequence belongs to the radical SAM superfamily. RlmN family. The cofactor is [4Fe-4S] cluster.

It is found in the cytoplasm. The catalysed reaction is adenosine(2503) in 23S rRNA + 2 reduced [2Fe-2S]-[ferredoxin] + 2 S-adenosyl-L-methionine = 2-methyladenosine(2503) in 23S rRNA + 5'-deoxyadenosine + L-methionine + 2 oxidized [2Fe-2S]-[ferredoxin] + S-adenosyl-L-homocysteine. It carries out the reaction adenosine(37) in tRNA + 2 reduced [2Fe-2S]-[ferredoxin] + 2 S-adenosyl-L-methionine = 2-methyladenosine(37) in tRNA + 5'-deoxyadenosine + L-methionine + 2 oxidized [2Fe-2S]-[ferredoxin] + S-adenosyl-L-homocysteine. Functionally, specifically methylates position 2 of adenine 2503 in 23S rRNA and position 2 of adenine 37 in tRNAs. In Bacillus subtilis (strain 168), this protein is Probable dual-specificity RNA methyltransferase RlmN.